A 119-amino-acid polypeptide reads, in one-letter code: Large ribosomal subunit protein bL20 (119 aa).

Belongs to the bacterial ribosomal protein bL20 family.

Binds directly to 23S ribosomal RNA and is necessary for the in vitro assembly process of the 50S ribosomal subunit. It is not involved in the protein synthesizing functions of that subunit. This is Large ribosomal subunit protein bL20 from Geobacillus sp. (strain WCH70).